A 235-amino-acid polypeptide reads, in one-letter code: Sugar fermentation stimulation protein homolog (235 aa).

This sequence belongs to the SfsA family.

This chain is Sugar fermentation stimulation protein homolog, found in Ectopseudomonas mendocina (strain ymp) (Pseudomonas mendocina).